Here is a 452-residue protein sequence, read N- to C-terminus: Probable diguanylate cyclase DgcT (452 aa).

Over 1 to 7 (MEKDYLR) the chain is Cytoplasmic. A helical transmembrane segment spans residues 8–28 (ISSTVLVSLLFGLALVLVNSW). Residues 29-45 (FNQPGVEEVVPRSTYLM) lie on the Periplasmic side of the membrane. A helical transmembrane segment spans residues 46 to 66 (VMIALFFIDTVAFIFMQLYFI). The Cytoplasmic segment spans residues 67-74 (YDRRQFSN). The helical transmembrane segment at 75–95 (CVLSLAFLSCLIYFVITVIII) threads the bilayer. The Periplasmic segment spans residues 96–111 (QQIIEERLTSSVVQND). Residues 112-132 (IAIYYLFRQMSLCILIFLALV) form a helical membrane-spanning segment. Residues 133 to 148 (NKVSENTKQRNLFSKK) lie on the Cytoplasmic side of the membrane. Residues 149 to 169 (MTLCISLFFVFGGPIVAHILS) traverse the membrane as a helical segment. At 170 to 195 (SHYESYNLHIAELTNENGQVVWKASY) the chain is on the periplasmic side. Residues 196-216 (VTIMIFMWLTLLSVNLYFNGL) form a helical membrane-spanning segment. The Cytoplasmic portion of the chain corresponds to 217 to 219 (RYD). The helical transmembrane segment at 220–240 (IWNGVTVIAFCAVLYNISLLF) threads the bilayer. Topologically, residues 241-254 (MSRYSVSTWYISRT) are periplasmic. The helical transmembrane segment at 255–275 (IEVVSKLTVMVIFMCHIFSAL) threads the bilayer. Over 276–452 (RVTKNIAHRD…RDVVNFCESP (177 aa)) the chain is Cytoplasmic. Positions 310-445 (TPYCVMIMDI…GRNKVVVRDV (136 aa)) constitute a GGDEF domain. The Mg(2+) site is built by Asp-318 and Ile-319. Substrate contacts are provided by Asn-326, His-331, and Asp-335. Position 361 (Glu-361) interacts with Mg(2+). Residue Glu-361 is the Proton acceptor of the active site. Arg-381 serves as a coordination point for substrate.

As to quaternary structure, homodimer. Mg(2+) is required as a cofactor.

It is found in the cell inner membrane. It carries out the reaction 2 GTP = 3',3'-c-di-GMP + 2 diphosphate. The protein operates within purine metabolism; 3',5'-cyclic di-GMP biosynthesis. Functionally, probably catalyzes the synthesis of cyclic-di-GMP (c-di-GMP) via the condensation of 2 GTP molecules. Overexpression leads to a strong repression of swimming; swimming returns to normal when residues 359-360 are both mutated to Ala. Overexpression also leads to a 20-fold increase in c-di-GMP levels in vivo. Cyclic-di-GMP is a second messenger which controls cell surface-associated traits in bacteria. This chain is Probable diguanylate cyclase DgcT, found in Escherichia coli (strain K12).